A 243-amino-acid chain; its full sequence is 23S rRNA (guanosine-2'-O-)-methyltransferase RlmB (243 aa).

Residues Gly196, Ile216, and Leu225 each contribute to the S-adenosyl-L-methionine site.

Belongs to the class IV-like SAM-binding methyltransferase superfamily. RNA methyltransferase TrmH family. RlmB subfamily. Homodimer.

It is found in the cytoplasm. The catalysed reaction is guanosine(2251) in 23S rRNA + S-adenosyl-L-methionine = 2'-O-methylguanosine(2251) in 23S rRNA + S-adenosyl-L-homocysteine + H(+). Functionally, specifically methylates the ribose of guanosine 2251 in 23S rRNA. This Shigella flexneri protein is 23S rRNA (guanosine-2'-O-)-methyltransferase RlmB.